An 857-amino-acid polypeptide reads, in one-letter code: Bifunctional levopimaradiene synthase, chloroplastic (857 aa).

The N-terminal 33 residues, 1-33 (MALPSSSLSSQIHTGATTQCIPHFHGSLNAGTS), are a transit peptide targeting the chloroplast. Substrate is bound at residue lysine 257. Mg(2+)-binding residues include aspartate 390 and aspartate 392. Residues 390-393 (DIDD) carry the DXDD motif motif. Lysine 477 is a binding site for substrate. Residues aspartate 609, aspartate 613, asparagine 753, threonine 757, and glutamate 761 each coordinate Mg(2+). A DDXXD motif motif is present at residues 609–613 (DDLYD).

Belongs to the terpene synthase family. Tpsd subfamily. It depends on Mg(2+) as a cofactor.

It localises to the plastid. It is found in the chloroplast. The catalysed reaction is (2E,6E,10E)-geranylgeranyl diphosphate = (+)-copalyl diphosphate. The enzyme catalyses (+)-copalyl diphosphate = abieta-7,13-diene + diphosphate. It carries out the reaction (+)-copalyl diphosphate = abieta-8(14),12-diene + diphosphate. It catalyses the reaction (+)-copalyl diphosphate = neoabietadiene + diphosphate. The protein operates within terpene metabolism; oleoresin biosynthesis. In terms of biological role, involved in defensive oleoresin formation in conifers in response to insect attack or other injury. Involved in diterpene (C20) olefins biosynthesis. Bifunctional enzyme that catalyzes two sequential cyclizations of geranylgeranyl diphosphate (GGPP) to levopimaradiene. Levopimaradiene is the major products of the enzyme with abietadiene and neoabietadiene. No activity with farnesyl diphosphate (FPP) as substrate. The sequence is that of Bifunctional levopimaradiene synthase, chloroplastic from Pinus banksiana (Jack pine).